The primary structure comprises 217 residues: Somatotropin (217 aa).

Residues 1 to 27 (MATGSHTATLLLAVALLGLPWPQEAGA) form the signal peptide. Residue H46 participates in Zn(2+) binding. C79 and C190 are oxidised to a cystine. S132 bears the Phosphoserine mark. Zn(2+) is bound at residue E199. A disulfide bond links C207 and C215.

The protein belongs to the somatotropin/prolactin family.

The protein resides in the secreted. Functionally, plays an important role in growth control. Its major role in stimulating body growth is to stimulate the liver and other tissues to secrete IGF1. It stimulates both the differentiation and proliferation of myoblasts. It also stimulates amino acid uptake and protein synthesis in muscle and other tissues. The chain is Somatotropin (GH1) from Xanthonycticebus pygmaeus (Pygmy slow loris).